A 459-amino-acid polypeptide reads, in one-letter code: Putrescine aminotransferase (459 aa).

Pyridoxal 5'-phosphate contacts are provided by residues 150–151 and Gln-274; that span reads GT. Lys-300 is subject to N6-(pyridoxal phosphate)lysine. Residue Thr-332 coordinates pyridoxal 5'-phosphate.

The protein belongs to the class-III pyridoxal-phosphate-dependent aminotransferase family. Putrescine aminotransferase subfamily. It depends on pyridoxal 5'-phosphate as a cofactor.

It catalyses the reaction an alkane-alpha,omega-diamine + 2-oxoglutarate = an omega-aminoaldehyde + L-glutamate. The enzyme catalyses putrescine + 2-oxoglutarate = 1-pyrroline + L-glutamate + H2O. It carries out the reaction cadaverine + 2-oxoglutarate = 5-aminopentanal + L-glutamate. It functions in the pathway amine and polyamine degradation; putrescine degradation; 4-aminobutanal from putrescine (transaminase route): step 1/1. In terms of biological role, catalyzes the aminotransferase reaction from putrescine to 2-oxoglutarate, leading to glutamate and 4-aminobutanal, which spontaneously cyclizes to form 1-pyrroline. This is the first step in one of two pathways for putrescine degradation, where putrescine is converted into 4-aminobutanoate (gamma-aminobutyrate or GABA) via 4-aminobutanal. Also functions as a cadaverine transaminase in a a L-lysine degradation pathway to succinate that proceeds via cadaverine, glutarate and L-2-hydroxyglutarate. The polypeptide is Putrescine aminotransferase (Shigella boydii serotype 4 (strain Sb227)).